Reading from the N-terminus, the 1555-residue chain is MGNSFDFGVLLILLKYFKSSRSQNGHSKQIRILLLNEMEKLEKTLFRLEQGFELQFRLGPTLQGKPVTVFTNYPFPGETFNREKFRSLEWENPTEREDDSDKYCKLNLQQSGSFQYYFLQGNEKSGGGYIVVDPILRVGADNHMLHLDCVTLQTFLAKCLGPFDEWESRLRVAKESGYNMIHFTPLQTLGLSRSCYSLADQLELNPDFSRPHKKYTWSDVGQLVEKLKREWNVLCITDVVYNHTAANSKWIQEHPECAYNLVNSPHLKPAWVLDRALWHFSCDVAEGKYKNRGVPALIENDHHLNCIRKVIWEDIFPKLHLWEFFQVDVYKAVEKFRGLLTQETWRVIKSDPKQHLKIIQDPEYRRFGCTVDMNIALATFIPHDNGPAAIEECCNWFRKRIEELNSEKHQLMNYHQEQAVNCLLGNVFYERLAGHGPKLGPVTRKYPLVTRYFTFPFEEMPVSTEETMIHLPNKACFFMAHNGWVMGDDPLRNFAEPGSDVYLRRELICWGDSVKLRYGTKPEDCPYLWAHMRKYTEIIATYFQGVRLDNCHSTPLHVAEYMLDAARKLQPNLYVVAELFTGSEDLDNIFVTRLGISSLIREAMSAYNSHEEGRLVYRYGGEPVGSFVQPCLRPLMPAIAHALFMDITHDNECPIVHRSVYDALPSTTIVSMACCASGSTRGYDELVPHQISVVSEERFYTKWNPEALPSNAGEVNFQSGIIAARCAINKLHQELGAKGFIQVYVDQVDEDIVAVTRHSPSIHQSFVAVSRTAFRNPKTSFYSKDVPQMCIPGKIEEVVLEARTIERNISPYRKDENSINGMPNITVEIREHIQLNESRIVKQAGVTTKGPNEYIQEIEFENLSPGSVIIFRVSLDPHAQVAVGILRNHLTQFSAHFKAGSLAVDNSDPILKIPFASIASKLTLAEINQILYRCESEEQEDGGGCYDIPNWSSLKYAGLQGLMSVLAEIRPKNDLGHPFCDNLRSGDWMIDYVSGRLISRSGTIAEVGKWLQAMFFYLKQIPRYLIPCYFDAILIGAYTTLLDIAWKQMSSFVQTGSTFVKHLSLGSVQMCGVGKFPSLPLLSPSLTDVPYRLNEITKEKEQCCVSLAAGLPHFSSGIFRCWGRDTFIALRGLLLITGRYLEARNIILAFAGTLRHGLIPNLLGEGTYARYNCRDAVWWWLQCIQDYCKMVPNGLDILKCPVSRMYPTDDSAPLPAGTLDQPLFDVIQEAMQRHMQGIQFRERNAGPQIDRNMKDEGFTVIAGVNEETGFVYGGNRFNCGTWMDKMGESDRARNRGIPATPRDGSAVEIVGLCKSTVRWLLELSKKNIFPYHEVRVKRHGKVVTVSYEEWNRKIQDNFEKRFHVSEDPSASNEEHPNLVHKRGIYKDSYGASSPWCDYQLRPNFTIAMVVAPELFTAEKAWKALEIAEKKLLGPLGMKTLDPDDMVYCGIYDNALDNDNYNLAKGFNYHQGPEWLWPVGYFLRAKLYFSKLMDRETNARTIFLVKNVLSRHYVHLERSPWKGLPELTNENGQYCPFSCETQAWSIATILETLYDL.

Ser87 is subject to Phosphoserine. Catalysis depends on residues Asp549, His552, and Asp650.

The protein belongs to the glycogen debranching enzyme family. As to quaternary structure, monomer. Interacts with NHLRC1/malin. The N-terminus is blocked. In terms of processing, ubiquitinated.

It is found in the cytoplasm. The enzyme catalyses Transfers a segment of a (1-&gt;4)-alpha-D-glucan to a new position in an acceptor, which may be glucose or a (1-&gt;4)-alpha-D-glucan.. The catalysed reaction is Hydrolysis of (1-&gt;6)-alpha-D-glucosidic branch linkages in glycogen phosphorylase limit dextrin.. Its function is as follows. Multifunctional enzyme acting as 1,4-alpha-D-glucan:1,4-alpha-D-glucan 4-alpha-D-glycosyltransferase and amylo-1,6-glucosidase in glycogen degradation. In Oryctolagus cuniculus (Rabbit), this protein is Glycogen debranching enzyme (AGL).